The primary structure comprises 144 residues: UPF0102 protein BURPS668_3819 (144 aa).

Residues 1–28 (MCHAREASLGTGEPEAAPRDNFPREAGS) form a disordered region. Positions 16-28 (AAPRDNFPREAGS) are enriched in basic and acidic residues.

This sequence belongs to the UPF0102 family.

The sequence is that of UPF0102 protein BURPS668_3819 from Burkholderia pseudomallei (strain 668).